Reading from the N-terminus, the 377-residue chain is Galactoside alpha-(1,2)-fucosyltransferase 1 (377 aa).

Residues 1–8 are Cytoplasmic-facing; it reads MWTPSRRQ. Residues 9-26 form a helical; Signal-anchor for type II membrane protein membrane-spanning segment; the sequence is LCLAFLLVCVLSAGSFFF. The Lumenal portion of the chain corresponds to 27–377; the sequence is HLNGGNFFRN…WKPDSLFRLV (351 aa). Residues Asn-67, Asn-303, and Asn-329 are each glycosylated (N-linked (GlcNAc...) asparagine).

Belongs to the glycosyltransferase 11 family. In terms of tissue distribution, in the adult, highly expressed in pancreas, testis and epididymis and to a lesser extent in thymus, lung, stomach, small intestine, colon, spleen and uterus. Not expressed in brain, heart, skeletal muscle, kidney, liver and bone marrow. Expressed in epididymis and testis.

It localises to the golgi apparatus. The protein localises to the golgi stack membrane. It carries out the reaction a beta-D-galactosyl-(1-&gt;4)-N-acetyl-beta-D-glucosaminyl derivative + GDP-beta-L-fucose = an alpha-L-Fuc-(1-&gt;2)-beta-D-Gal-(1-&gt;4)-beta-D-GlcNAc derivative + GDP + H(+). It catalyses the reaction a ganglioside GA1 + GDP-beta-L-fucose = a ganglioside Fuc-GA1 + GDP + H(+). The enzyme catalyses a beta-D-Gal-(1-&gt;3)-beta-D-GlcNAc-(1-&gt;3)-beta-D-Gal-(1-&gt;4)-beta-D-Glc-(1&lt;-&gt;1')-Cer(d18:1(4E)) + GDP-beta-L-fucose = alpha-L-fucosyl-(1-&gt;2)- beta-D-galactosyl-(1-&gt;3)-N-acetyl-beta-D-glucosaminyl-(1-&gt;3)-beta-D-galactosyl-(1-&gt;4)-beta-D-glucosyl-(1&lt;-&gt;1')-N-acylsphing-4-enine + GDP + H(+). The catalysed reaction is a neolactoside nLc4Cer(d18:1(4E)) + GDP-beta-L-fucose = a neolactoside IV(2)-alpha-Fuc-nLc4Cer(d18:1(4E)) + GDP + H(+). It carries out the reaction a ganglioside GM1 + GDP-beta-L-fucose = a ganglioside Fuc-GM1 + GDP + H(+). It catalyses the reaction beta-D-galactosyl-(1-&gt;3)-N-acetyl-D-galactosamine + GDP-beta-L-fucose = alpha-L-fucosyl-(1-&gt;2)-beta-D-galactosyl-(1-&gt;3)-N-acetyl-D-galactosamine + GDP + H(+). Its pathway is protein modification; protein glycosylation. Functionally, catalyzes the transfer of L-fucose, from a guanosine diphosphate-beta-L-fucose, to the terminal galactose residue of glycoconjugates through an alpha(1,2) linkage leading to H antigen synthesis that is an intermediate substrate in the synthesis of ABO blood group antigens. H antigen is essential for maturation of the glomerular layer of the main olfactory bulb, in cell migration and early cell-cell contacts during tumor associated angiogenesis. Preferentially fucosylates soluble lactose and to a lesser extent, fucosylates glycolipids gangliosides GA1 and GM1a. In Mus musculus (Mouse), this protein is Galactoside alpha-(1,2)-fucosyltransferase 1.